Consider the following 520-residue polypeptide: 2-isopropylmalate synthase (520 aa).

Positions 5–267 constitute a Pyruvate carboxyltransferase domain; the sequence is VIIFDTTLRD…YTNINHQEIY (263 aa). Mn(2+)-binding residues include D14, H202, H204, and N238. The interval 392-520 is regulatory domain; that stretch reads HLDNFNIQSG…RIQQNTKEMV (129 aa).

The protein belongs to the alpha-IPM synthase/homocitrate synthase family. LeuA type 1 subfamily. As to quaternary structure, homodimer. Mn(2+) is required as a cofactor.

It localises to the cytoplasm. The catalysed reaction is 3-methyl-2-oxobutanoate + acetyl-CoA + H2O = (2S)-2-isopropylmalate + CoA + H(+). The protein operates within amino-acid biosynthesis; L-leucine biosynthesis; L-leucine from 3-methyl-2-oxobutanoate: step 1/4. Catalyzes the condensation of the acetyl group of acetyl-CoA with 3-methyl-2-oxobutanoate (2-ketoisovalerate) to form 3-carboxy-3-hydroxy-4-methylpentanoate (2-isopropylmalate). In Photorhabdus laumondii subsp. laumondii (strain DSM 15139 / CIP 105565 / TT01) (Photorhabdus luminescens subsp. laumondii), this protein is 2-isopropylmalate synthase.